The sequence spans 1154 residues: Spike glycoprotein (1154 aa).

The first 18 residues, 1 to 18, serve as a signal peptide directing secretion; it reads MLERSLLLATLLSALCSA. The Extracellular portion of the chain corresponds to 19 to 1096; the sequence is NLFGNNSYVY…LKTYIKWPWY (1078 aa). 23 N-linked (GlcNAc...) asparagine; by host glycosylation sites follow: Asn-23, Asn-74, Asn-102, Asn-139, Asn-145, Asn-164, Asn-179, Asn-213, Asn-238, Asn-248, Asn-265, Asn-272, Asn-277, Asn-307, Asn-426, Asn-448, Asn-514, Asn-531, Asn-543, Asn-580, Asn-592, Asn-670, and Asn-677. The tract at residues 770–875 is heptad repeat 1 (HR1); that stretch reads IPFATQLQAR…QVDRIITGRL (106 aa). A coiled-coil region spans residues 823–867; the sequence is QDVVNKQSSILTETMASLNKNFGAISSVLQDIYQQLDSIQADAQV. Residues Asn-948, Asn-961, Asn-980, Asn-1015, Asn-1039, Asn-1052, and Asn-1075 are each glycosylated (N-linked (GlcNAc...) asparagine; by host). Residues 1025-1106 form a heptad repeat 2 (HR2) region; that stretch reads NDDFDFDDEL…VWLAIAFATI (82 aa). The stretch at 1056 to 1084 forms a coiled coil; it reads PILDIGSEIDRIQGVIQGLNDSLIDLETL. The helical transmembrane segment at 1097 to 1117 threads the bilayer; it reads VWLAIAFATIIFILILGWLFF. Over 1118-1154 the chain is Cytoplasmic; sequence MTGCCGCCCGCFGIIPLMSKCGKKSSYYTTFDNDVVT.

This sequence belongs to the gammacoronaviruses spike protein family. As to quaternary structure, homotrimer; each monomer consists of a S1 and a S2 subunit. The resulting peplomers protrude from the virus surface as spikes. In terms of processing, specific enzymatic cleavages in vivo yield mature proteins. The precursor is processed into S1 and S2 by host cell furin or furin-like protease to yield the mature S1 and S2 proteins. The cleavage site between S1 and S2 requires the optimal sequence [KR]-X-[KR]-R. Additionally, a second cleavage leads to the release of a fusion peptide after viral attachment to host cell receptor.

It localises to the virion membrane. It is found in the host endoplasmic reticulum-Golgi intermediate compartment membrane. Attaches the virion to the host cell membrane by interacting with sialic acids, initiating the infection. Functionally, mediates fusion of the virion and cellular membranes by acting as a class I viral fusion protein. Under the current model, the protein has at least 3 conformational states: pre-fusion native state, pre-hairpin intermediate state, and post-fusion hairpin state. During viral and target cell membrane fusion, the coiled coil regions (heptad repeats) assume a trimer-of-hairpins structure, positioning the fusion peptide in close proximity to the C-terminal region of the ectodomain. The formation of this structure appears to drive apposition and subsequent fusion of viral and target cell membranes. In terms of biological role, acts as a viral fusion peptide after S2 cleavage occurring upon virus endocytosis. This Gallus gallus (Chicken) protein is Spike glycoprotein.